A 2278-amino-acid chain; its full sequence is Protein Ycf2 (2278 aa).

This sequence belongs to the Ycf2 family.

Its subcellular location is the plastid. The protein localises to the chloroplast stroma. The protein resides in the chromoplast stroma. Probable ATPase of unknown function. Its presence in a non-photosynthetic plant (Epifagus virginiana) and experiments in tobacco indicate that it has an essential function which is probably not related to photosynthesis. The sequence is that of Protein Ycf2 (ycf2-A) from Solanum lycopersicum (Tomato).